The chain runs to 560 residues: Beta-glucosidase 26, peroxisomal (560 aa).

Residues Gln33, His137, 182–183, Tyr326, Glu398, Trp450, 457–458, and Tyr466 each bind a beta-D-glucoside; these read NE and EW. The active-site Proton donor is Glu183. Glu398 serves as the catalytic Nucleophile.

Belongs to the glycosyl hydrolase 1 family.

It localises to the peroxisome. It catalyses the reaction Hydrolysis of terminal, non-reducing beta-D-glucosyl residues with release of beta-D-glucose.. In terms of biological role, possesses beta-glucosidase activity toward 4-methyl-umbelliferyl-beta-D-glucoside in vitro. Possesses myrosinase activity toward indol-3-yl-methylglucosinolate (I3M) and 4-methoxy-indol-3-yl-methylglucosinolate (4MO-I3M) in vivo. Component of an inducible preinvasion resistance mechanism that prevents penetration of the nonhost fungal species B.graminis and E.pisi. Involved in indole glucosinolate (IGS) activation during pattern-triggered immunity (PTI). Functions as a myrosinase for the breakdown of flg22-triggered IGS. Required for both callose deposition and glucosinolate activation during pathogen-triggered resistance. During fungal attack, required for IGS activation that mediates broad-spectrum antifungal defense. This chain is Beta-glucosidase 26, peroxisomal, found in Arabidopsis thaliana (Mouse-ear cress).